We begin with the raw amino-acid sequence, 155 residues long: SsrA-binding protein (155 aa).

It belongs to the SmpB family.

The protein localises to the cytoplasm. Its function is as follows. Required for rescue of stalled ribosomes mediated by trans-translation. Binds to transfer-messenger RNA (tmRNA), required for stable association of tmRNA with ribosomes. tmRNA and SmpB together mimic tRNA shape, replacing the anticodon stem-loop with SmpB. tmRNA is encoded by the ssrA gene; the 2 termini fold to resemble tRNA(Ala) and it encodes a 'tag peptide', a short internal open reading frame. During trans-translation Ala-aminoacylated tmRNA acts like a tRNA, entering the A-site of stalled ribosomes, displacing the stalled mRNA. The ribosome then switches to translate the ORF on the tmRNA; the nascent peptide is terminated with the 'tag peptide' encoded by the tmRNA and targeted for degradation. The ribosome is freed to recommence translation, which seems to be the essential function of trans-translation. The polypeptide is SsrA-binding protein (Streptococcus pyogenes serotype M18 (strain MGAS8232)).